The following is a 1141-amino-acid chain: cGMP-inhibited 3',5'-cyclic phosphodiesterase 3A (1141 aa).

Positions 1-42 are disordered; that stretch reads MAVRGEAAQDLAKPGLGGASPARVARGNHRHRGESSPSPRGS. The chain crosses the membrane as a helical span at residues 62–82; the sequence is SALCAGSLSVLLALLVRLVGG. Residues 90–111 are disordered; sequence KSQEAAAEEEEEEGARGGVFPG. Transmembrane regions (helical) follow at residues 127-147, 157-177, 182-202, 207-227, and 229-249; these read LQPAALLFSLLCAFFWMGLCL, AVALLAACCAGEALVQLSLGV, LLSLPAAGVLLSCLGGATWLV, LGVLMVAWTSVLRTVALVSLE, and FKVAWRPYLAYLAAVLGLLLA. S310 is subject to Phosphoserine. The segment covering 433-445 has biased composition (low complexity); it reads RVSSTWTTTTSAT. The tract at residues 433 to 483 is disordered; sequence RVSSTWTTTTSATGLPTLEPAPVRRDRSASIKPHEAPSPSAVNPDSWNAPG. Residues 454-467 show a composition bias toward basic and acidic residues; the sequence is PVRRDRSASIKPHE. A compositionally biased stretch (polar residues) spans 472–483; that stretch reads SAVNPDSWNAPG. 4 positions are modified to phosphoserine: S492, S520, S524, and S533. Residues 505-654 are disordered; the sequence is VKAKKQNRPG…CQREPQRKAS (150 aa). Over residues 522-532 the composition is skewed to pro residues; it reads VPSPSSSPPQG. The span at 533-544 shows a compositional bias: low complexity; sequence SPASSPVSNSAS. Residues 618–637 show a composition bias toward polar residues; the sequence is TSQVTSDYETNNNSDSSDIL. The tract at residues 669–1141 is interaction with SLFN12; the sequence is KPILAPEPLV…EETLAPQPDL (473 aa). One can recognise a PDEase domain in the interval 674–1093; it reads PEPLVMDNLD…MMWKKVIEEE (420 aa). Catalysis depends on H752, which acts as the Proton donor. Residue H752 participates in AMP binding. Positions 756, 836, 837, and 950 each coordinate Mn(2+). AMP-binding residues include D837, D950, and Q1001. Residue D837 participates in Mg(2+) binding. 2 disordered regions span residues 1024 to 1060 and 1120 to 1141; these read GKWVDDSDDSGDTDDPEEEEEEAETPHEDEACESSIA and KEEEEEKGKPRAEETLAPQPDL. The span at 1029 to 1046 shows a compositional bias: acidic residues; that stretch reads DSDDSGDTDDPEEEEEEA. Phosphoserine is present on S1033. At T1036 the chain carries Phosphothreonine. A Glycyl lysine isopeptide (Lys-Gly) (interchain with G-Cter in SUMO2) cross-link involves residue K1120.

Belongs to the cyclic nucleotide phosphodiesterase family. PDE3 subfamily. It depends on Mn(2+) as a cofactor. Mg(2+) is required as a cofactor.

It localises to the membrane. The protein localises to the cytoplasm. Its subcellular location is the cytosol. The enzyme catalyses a nucleoside 3',5'-cyclic phosphate + H2O = a nucleoside 5'-phosphate + H(+). The catalysed reaction is 3',5'-cyclic AMP + H2O = AMP + H(+). It carries out the reaction 3',5'-cyclic GMP + H2O = GMP + H(+). It catalyses the reaction 3',5'-cyclic UMP + H2O = UMP + H(+). Inhibited by cGMP. Cyclic nucleotide phosphodiesterase with specificity for the second messengers cAMP and cGMP, which are key regulators of many important physiological processes. Also has activity toward cUMP. Independently of its catalytic activity it is part of an E2/17beta-estradiol-induced pro-apoptotic signaling pathway. E2 stabilizes the PDE3A/SLFN12 complex in the cytosol, promoting the dephosphorylation of SLFN12 and activating its pro-apoptotic ribosomal RNA/rRNA ribonuclease activity. This apoptotic pathway might be relevant in tissues with high concentration of E2 and be for instance involved in placenta remodeling. The sequence is that of cGMP-inhibited 3',5'-cyclic phosphodiesterase 3A from Mus musculus (Mouse).